Reading from the N-terminus, the 348-residue chain is MIEADRLIAASGRDREEVQDRAIRPLSLDEYIGQPVVREQMALFIQAARGRGESLDHTLIFGPPGLGKTTLANIIAHEMGVSVKSTSGPILERPGDLAAMLTNLEPHDVLFIDEIHRLSPVVEEVLYPAMEDFQLDIMIGEGPAARSIKLDLPPFTLVGATTRAGMLTNPLRDRFGIVQRLEFYNDKDLSTIVSRSANILGLAIEDQGAYEIARRARGTPRIANRLLRRVRDYAEVRGKGQITKAVADMALNLLDVDERGFDHSDRRLLLTMIEKFDGGPVGVDNLAAAISEERHTIEDVLEPYLIQQGYIMRTPRGRVVTRHAYLHFGLNIPGRLGEGGDFSGPGDE.

Residues 4 to 184 (ADRLIAASGR…FGIVQRLEFY (181 aa)) form a large ATPase domain (RuvB-L) region. ATP contacts are provided by residues Ile23, Arg24, Gly65, Lys68, Thr69, Thr70, 131 to 133 (EDF), Arg174, Tyr184, and Arg221. Residue Thr69 coordinates Mg(2+). The tract at residues 185–255 (NDKDLSTIVS…VADMALNLLD (71 aa)) is small ATPAse domain (RuvB-S). The head domain (RuvB-H) stretch occupies residues 258-348 (ERGFDHSDRR…GGDFSGPGDE (91 aa)). The DNA site is built by Arg294, Arg313, and Arg318.

The protein belongs to the RuvB family. In terms of assembly, homohexamer. Forms an RuvA(8)-RuvB(12)-Holliday junction (HJ) complex. HJ DNA is sandwiched between 2 RuvA tetramers; dsDNA enters through RuvA and exits via RuvB. An RuvB hexamer assembles on each DNA strand where it exits the tetramer. Each RuvB hexamer is contacted by two RuvA subunits (via domain III) on 2 adjacent RuvB subunits; this complex drives branch migration. In the full resolvosome a probable DNA-RuvA(4)-RuvB(12)-RuvC(2) complex forms which resolves the HJ.

The protein resides in the cytoplasm. It catalyses the reaction ATP + H2O = ADP + phosphate + H(+). In terms of biological role, the RuvA-RuvB-RuvC complex processes Holliday junction (HJ) DNA during genetic recombination and DNA repair, while the RuvA-RuvB complex plays an important role in the rescue of blocked DNA replication forks via replication fork reversal (RFR). RuvA specifically binds to HJ cruciform DNA, conferring on it an open structure. The RuvB hexamer acts as an ATP-dependent pump, pulling dsDNA into and through the RuvAB complex. RuvB forms 2 homohexamers on either side of HJ DNA bound by 1 or 2 RuvA tetramers; 4 subunits per hexamer contact DNA at a time. Coordinated motions by a converter formed by DNA-disengaged RuvB subunits stimulates ATP hydrolysis and nucleotide exchange. Immobilization of the converter enables RuvB to convert the ATP-contained energy into a lever motion, pulling 2 nucleotides of DNA out of the RuvA tetramer per ATP hydrolyzed, thus driving DNA branch migration. The RuvB motors rotate together with the DNA substrate, which together with the progressing nucleotide cycle form the mechanistic basis for DNA recombination by continuous HJ branch migration. Branch migration allows RuvC to scan DNA until it finds its consensus sequence, where it cleaves and resolves cruciform DNA. This chain is Holliday junction branch migration complex subunit RuvB, found in Pseudomonas putida (strain ATCC 700007 / DSM 6899 / JCM 31910 / BCRC 17059 / LMG 24140 / F1).